A 196-amino-acid polypeptide reads, in one-letter code: Imidazoleglycerol-phosphate dehydratase (196 aa).

Belongs to the imidazoleglycerol-phosphate dehydratase family.

Its subcellular location is the cytoplasm. It carries out the reaction D-erythro-1-(imidazol-4-yl)glycerol 3-phosphate = 3-(imidazol-4-yl)-2-oxopropyl phosphate + H2O. Its pathway is amino-acid biosynthesis; L-histidine biosynthesis; L-histidine from 5-phospho-alpha-D-ribose 1-diphosphate: step 6/9. The sequence is that of Imidazoleglycerol-phosphate dehydratase from Lachnoclostridium phytofermentans (strain ATCC 700394 / DSM 18823 / ISDg) (Clostridium phytofermentans).